We begin with the raw amino-acid sequence, 122 residues long: MSITNEQILDAVAEMSVMQVVELIEAMEEKFGVSAAAAVVAGGAAAGAAVEEQTEFDVILESAGGNKVAVIKAVRGATGLGLKEAKALVDGAPAPLKEGVDKAEADALKAQLEEAGATVAVK.

This sequence belongs to the bacterial ribosomal protein bL12 family. As to quaternary structure, homodimer. Part of the ribosomal stalk of the 50S ribosomal subunit. Forms a multimeric L10(L12)X complex, where L10 forms an elongated spine to which 2 to 4 L12 dimers bind in a sequential fashion. Binds GTP-bound translation factors.

In terms of biological role, forms part of the ribosomal stalk which helps the ribosome interact with GTP-bound translation factors. Is thus essential for accurate translation. In Vibrio parahaemolyticus serotype O3:K6 (strain RIMD 2210633), this protein is Large ribosomal subunit protein bL12.